The primary structure comprises 487 residues: MRETKEQPIWYGKVFSSNWVEARGGVANVVDPSNGDILGITGVANGEDVDAAVNAAKRAQKEWAAIPFSERAAIVRKAAEKLKEREYEFADWNVRECGAIRPKGLWEAGIAYEQMHQAAGLASLPNGTLFPSAVPGRMNLCQRVPVGVVGVIAPWNFPLFLAMRSVAPALALGNAVILKPDLQTAVTGGALIAEIFSDAGMPDGVLHVLPGGADVGESMVANSGINMISFTGSTQVGRLIGEKCGRMLKKVALELGGNNVHIVLPDADLEGAVSCAAWGTFLHQGQVCMAAGRHLVHRDVAQQYAEKLALRAKNLVVGDPNSDQVHLGPLINEKQVVRVHALVESAQRAGAQVLAGGTYQDRYYQATVIMDVKPEMEVFKSEIFGPVAPITVFDSIEEAIELANCSEYGLAASIHTRALATGLDIAKRLNTGMVHINDQPINCEPHVPFGGMGASGSGGRFGGPASIEEFTQSQWISMVEKPANYPF.

Residue 232-237 (GSTQVG) participates in NAD(+) binding. Catalysis depends on residues E254 and C288.

This sequence belongs to the aldehyde dehydrogenase family. Homotetramer.

It catalyses the reaction benzaldehyde + NAD(+) + H2O = benzoate + NADH + 2 H(+). In Pseudomonas putida (Arthrobacter siderocapsulatus), this protein is Benzaldehyde dehydrogenase [NAD(+)] (xylC).